We begin with the raw amino-acid sequence, 333 residues long: Putative ketol-acid reductoisomerase 2 (333 aa).

Residues M1 to S182 enclose the KARI N-terminal Rossmann domain. Residues S183 to K329 enclose the KARI C-terminal knotted domain.

It belongs to the ketol-acid reductoisomerase family.

It catalyses the reaction (2R)-2,3-dihydroxy-3-methylbutanoate + NADP(+) = (2S)-2-acetolactate + NADPH + H(+). The catalysed reaction is (2R,3R)-2,3-dihydroxy-3-methylpentanoate + NADP(+) = (S)-2-ethyl-2-hydroxy-3-oxobutanoate + NADPH + H(+). It participates in amino-acid biosynthesis; L-isoleucine biosynthesis; L-isoleucine from 2-oxobutanoate: step 2/4. The protein operates within amino-acid biosynthesis; L-valine biosynthesis; L-valine from pyruvate: step 2/4. This Saccharolobus solfataricus (strain ATCC 35092 / DSM 1617 / JCM 11322 / P2) (Sulfolobus solfataricus) protein is Putative ketol-acid reductoisomerase 2 (ilvC2).